The chain runs to 125 residues: Large ribosomal subunit protein uL18 (125 aa).

At Gly-2 the chain carries N-acetylglycine. N6-acetyllysine occurs at positions 5 and 48.

It belongs to the universal ribosomal protein uL18 family. As to quaternary structure, component of the large ribosomal subunit (LSU). Part of the 5S RNP complex, which is a LSU subcomplex composed of the 5S RNA, RPL5 and RPL11. Component of a hexameric 5S RNP precursor complex, composed of 5S RNA, RRS1, RPF2/BXDC1, RPL5, RPL11 and HEATR3; this complex acts as a precursor for ribosome assembly. Interacts with NVL in an ATP-dependent manner. Interacts with RRP1B. Interacts with IPO5, IPO7 and KPNB1; these interactions may be involved in RPL5 nuclear import for the assembly of ribosomal subunits. Interacts with RRP1B.

Its subcellular location is the cytoplasm. The protein resides in the nucleus. It is found in the nucleolus. Component of the ribosome, a large ribonucleoprotein complex responsible for the synthesis of proteins in the cell. The small ribosomal subunit (SSU) binds messenger RNAs (mRNAs) and translates the encoded message by selecting cognate aminoacyl-transfer RNA (tRNA) molecules. The large subunit (LSU) contains the ribosomal catalytic site termed the peptidyl transferase center (PTC), which catalyzes the formation of peptide bonds, thereby polymerizing the amino acids delivered by tRNAs into a polypeptide chain. The nascent polypeptides leave the ribosome through a tunnel in the LSU and interact with protein factors that function in enzymatic processing, targeting, and the membrane insertion of nascent chains at the exit of the ribosomal tunnel. As part of the 5S RNP/5S ribonucleoprotein particle it is an essential component of the LSU, required for its formation and the maturation of rRNAs. It also couples ribosome biogenesis to p53/TP53 activation. As part of the 5S RNP it accumulates in the nucleoplasm and inhibits MDM2, when ribosome biogenesis is perturbed, mediating the stabilization and the activation of TP53. The sequence is that of Large ribosomal subunit protein uL18 (RPL5) from Sus scrofa (Pig).